Here is an 88-residue protein sequence, read N- to C-terminus: Small ribosomal subunit protein uS15 (88 aa).

This sequence belongs to the universal ribosomal protein uS15 family. As to quaternary structure, part of the 30S ribosomal subunit. Forms a bridge to the 50S subunit in the 70S ribosome, contacting the 23S rRNA.

Functionally, one of the primary rRNA binding proteins, it binds directly to 16S rRNA where it helps nucleate assembly of the platform of the 30S subunit by binding and bridging several RNA helices of the 16S rRNA. Its function is as follows. Forms an intersubunit bridge (bridge B4) with the 23S rRNA of the 50S subunit in the ribosome. The protein is Small ribosomal subunit protein uS15 of Finegoldia magna (strain ATCC 29328 / DSM 20472 / WAL 2508) (Peptostreptococcus magnus).